The primary structure comprises 290 residues: Homeobox protein EMX1 (290 aa).

The homeobox DNA-binding region spans 192 to 251 (PKRIRTAFSPSQLLRLERAFEKNHYVVGAERKQLAGSLSLSETQVKVWFQNRRTKYKRQK). Positions 249 to 290 (RQKLEEEGPESEQKKKGSHHINRWRIATKQANGEDIDVTSND) are disordered. The span at 250–263 (QKLEEEGPESEQKK) shows a compositional bias: basic and acidic residues.

It belongs to the EMX homeobox family. Interacts with WRD11 (via the N-terminal and the central portion of the protein); the interaction associates EMX1 with GLI3. As to expression, cerebral cortex.

It is found in the nucleus. The protein resides in the cytoplasm. Functionally, transcription factor, which in cooperation with EMX2, acts to generate the boundary between the roof and archipallium in the developing brain. May function in combinations with OTX1/2 to specify cell fates in the developing central nervous system. The protein is Homeobox protein EMX1 of Homo sapiens (Human).